The following is a 349-amino-acid chain: S-adenosylmethionine:tRNA ribosyltransferase-isomerase (349 aa).

It belongs to the QueA family. In terms of assembly, monomer.

The protein resides in the cytoplasm. The enzyme catalyses 7-aminomethyl-7-carbaguanosine(34) in tRNA + S-adenosyl-L-methionine = epoxyqueuosine(34) in tRNA + adenine + L-methionine + 2 H(+). The protein operates within tRNA modification; tRNA-queuosine biosynthesis. Functionally, transfers and isomerizes the ribose moiety from AdoMet to the 7-aminomethyl group of 7-deazaguanine (preQ1-tRNA) to give epoxyqueuosine (oQ-tRNA). This chain is S-adenosylmethionine:tRNA ribosyltransferase-isomerase, found in Pseudomonas entomophila (strain L48).